Consider the following 992-residue polypeptide: Tubulin glycylase 3A (992 aa).

2 disordered regions span residues 1–54 (MQTR…NRVV) and 68–113 (QSDS…LGAP). The segment covering 7 to 26 (SEPHRSRDQVTDGDRNRDQP) has biased composition (basic and acidic residues). Pro residues predominate over residues 39 to 49 (VTPPAAPPPTP). One can recognise a TTL domain in the interval 295–645 (FKLTACVAFL…RRTDPKAELG (351 aa)). ATP is bound by residues 457 to 460 (QKYI), K470, and D472. 2 disordered regions span residues 746–766 (SLCS…TATP) and 791–828 (KRNT…PVES). A compositionally biased stretch (polar residues) spans 794 to 807 (TGGSLSGEQVQSTA).

It is found in the cytoplasm. It localises to the cytoskeleton. Polylycylase which modifies alpha- and beta-tubulin, generating side chains of glycine on the gamma-carboxyl groups of specific glutamate residues within the C-terminal tail of alpha- and beta-tubulin. Involved both in the side-chain initiation and elongation steps of the polyglycylation reaction by adding a single glycine chain to generate monoglycine side chains and by elongating monoglycine side chains to polyglycine side chains. In Drosophila melanogaster (Fruit fly), this protein is Tubulin glycylase 3A (TTLL3A).